Reading from the N-terminus, the 263-residue chain is Proteasome subunit alpha type-1 (263 aa).

At Met-1 the chain carries N-acetylmethionine. A Phosphoserine; alternate modification is found at Ser-110. Ser-110 carries O-linked (GlcNAc) serine; alternate glycosylation. Residue Lys-115 forms a Glycyl lysine isopeptide (Lys-Gly) (interchain with G-Cter in ubiquitin) linkage. A Phosphoserine modification is found at Ser-177. Lys-208 participates in a covalent cross-link: Glycyl lysine isopeptide (Lys-Gly) (interchain with G-Cter in ubiquitin). The segment at 232 to 263 (FLEGLEERPQRKAQPAQPADEPAEKADEPMEH) is disordered. Positions 253–263 (PAEKADEPMEH) are enriched in basic and acidic residues.

The protein belongs to the peptidase T1A family. As to quaternary structure, the 26S proteasome consists of a 20S proteasome core and two 19S regulatory subunits. The 20S proteasome core is a barrel-shaped complex made of 28 subunits that are arranged in four stacked rings. The two outer rings are each formed by seven alpha subunits, and the two inner rings are formed by seven beta subunits. The proteolytic activity is exerted by three beta-subunits PSMB5, PSMB6 and PSMB7. Interacts with NOTCH3. Interacts with ZFAND1.

The protein localises to the cytoplasm. It is found in the nucleus. In terms of biological role, component of the 20S core proteasome complex involved in the proteolytic degradation of most intracellular proteins. This complex plays numerous essential roles within the cell by associating with different regulatory particles. Associated with two 19S regulatory particles, forms the 26S proteasome and thus participates in the ATP-dependent degradation of ubiquitinated proteins. The 26S proteasome plays a key role in the maintenance of protein homeostasis by removing misfolded or damaged proteins that could impair cellular functions, and by removing proteins whose functions are no longer required. Associated with the PA200 or PA28, the 20S proteasome mediates ubiquitin-independent protein degradation. This type of proteolysis is required in several pathways including spermatogenesis (20S-PA200 complex) or generation of a subset of MHC class I-presented antigenic peptides (20S-PA28 complex). This is Proteasome subunit alpha type-1 (PSMA1) from Macaca fascicularis (Crab-eating macaque).